The following is a 110-amino-acid chain: Protein RnfH (110 aa).

The segment at 86-110 is disordered; it reads RQRRVEKSRQEGSVEGRKWLPKDSR. Positions 88–110 are enriched in basic and acidic residues; the sequence is RRVEKSRQEGSVEGRKWLPKDSR.

This sequence belongs to the UPF0125 (RnfH) family.

In Paraburkholderia phymatum (strain DSM 17167 / CIP 108236 / LMG 21445 / STM815) (Burkholderia phymatum), this protein is Protein RnfH.